The sequence spans 318 residues: Putative HTH-type transcriptional regulatory protein MJ1164 (318 aa).

The HTH cro/C1-type domain occupies 131–189; it reads LKEVREAMGISVGKLAEVAGVSRKAIYKYETQMANPSVDVALKIEEFLDVPLVKGIDLF. The H-T-H motif DNA-binding region spans 142 to 161; sequence VGKLAEVAGVSRKAIYKYET.

The sequence is that of Putative HTH-type transcriptional regulatory protein MJ1164 from Methanocaldococcus jannaschii (strain ATCC 43067 / DSM 2661 / JAL-1 / JCM 10045 / NBRC 100440) (Methanococcus jannaschii).